The chain runs to 209 residues: 8-oxoguanine DNA glycosylase/AP lyase (209 aa).

Active-site residues include Lys-132 and Asp-150.

The protein belongs to the type-2 OGG1 family.

It catalyses the reaction 2'-deoxyribonucleotide-(2'-deoxyribose 5'-phosphate)-2'-deoxyribonucleotide-DNA = a 3'-end 2'-deoxyribonucleotide-(2,3-dehydro-2,3-deoxyribose 5'-phosphate)-DNA + a 5'-end 5'-phospho-2'-deoxyribonucleoside-DNA + H(+). Catalyzes the excision of an oxidatively damaged form of guanine (7,8-dihydro-8-oxoguanine = 8-oxoG) from DNA. Also cleaves the DNA backbone at apurinic/apyrimidinic sites (AP sites). This Picrophilus torridus (strain ATCC 700027 / DSM 9790 / JCM 10055 / NBRC 100828 / KAW 2/3) protein is 8-oxoguanine DNA glycosylase/AP lyase.